The sequence spans 680 residues: Chaperone protein dnaK3 (680 aa).

The residue at position 205 (T205) is a Phosphothreonine; by autocatalysis. The disordered stretch occupies residues 640–680; it reads GRERRRDDDEDEWAEPPRTRRSRSYSQRADSAPWDDWDDDW.

The protein belongs to the heat shock protein 70 family.

Acts as a chaperone. The polypeptide is Chaperone protein dnaK3 (dnaK3) (Thermosynechococcus vestitus (strain NIES-2133 / IAM M-273 / BP-1)).